A 108-amino-acid chain; its full sequence is MTDKQINLEVAYALPDRQALLEVVVEMGHTVEEAIKASGILQRFDDIDLSKSKVGIWNRTCKLSDVPQDGDRIEIYRPLIADPKEARRRRAEKAKEEGRANKVTGGRA.

The tract at residues 86–108 is disordered; it reads ARRRRAEKAKEEGRANKVTGGRA.

This sequence belongs to the UPF0125 (RnfH) family.

The protein is Protein RnfH of Pseudoalteromonas atlantica (strain T6c / ATCC BAA-1087).